The sequence spans 219 residues: Probable GTP-binding protein EngB (219 aa).

An EngB-type G domain is found at 42–219; sequence SVPEIAFAGR…RTAVLEAVEL (178 aa). GTP-binding positions include 50 to 57, 77 to 81, 97 to 100, 164 to 167, and 198 to 200; these read GRSNVGKS, GRTQE, DMPG, TKAD, and TSS. Residues Ser57 and Thr79 each contribute to the Mg(2+) site.

Belongs to the TRAFAC class TrmE-Era-EngA-EngB-Septin-like GTPase superfamily. EngB GTPase family. Mg(2+) is required as a cofactor.

In terms of biological role, necessary for normal cell division and for the maintenance of normal septation. This Sphingopyxis alaskensis (strain DSM 13593 / LMG 18877 / RB2256) (Sphingomonas alaskensis) protein is Probable GTP-binding protein EngB.